The sequence spans 276 residues: Nickel import system permease protein NikC (276 aa).

5 helical membrane passes run 10–30, 73–93, 108–128, 186–206, and 238–258; these read LIFF…FFVS, LFVT…LGLF, FIDV…ASFF, IIPA…LYIS, and IMLI…NLTG. In terms of domain architecture, ABC transmembrane type-1 spans 69–258; sequence ARSTLFVTVL…ITILIFNLTG (190 aa).

It belongs to the binding-protein-dependent transport system permease family. OppBC subfamily. In terms of assembly, the complex is composed of two ATP-binding proteins (NikD and NikE), two transmembrane proteins (NikB and NikC) and a solute-binding protein (NikA).

It is found in the cell membrane. Functionally, part of the ABC transporter complex NikABCDE (Opp2) involved in nickel import. Probably responsible for the translocation of the substrate across the membrane. This chain is Nickel import system permease protein NikC, found in Staphylococcus aureus (strain bovine RF122 / ET3-1).